Consider the following 307-residue polypeptide: Secondary metabolism regulator LAE1 (307 aa).

This sequence belongs to the methyltransferase superfamily. LaeA methyltransferase family. As to quaternary structure, component of the heterotrimeric velvet complex composed of LAE1, VEL1 and VEL2; VEL1 acting as a bridging protein between LAE1 and VEL2.

The protein resides in the nucleus. The catalysed reaction is L-methionyl-[protein] + S-adenosyl-L-methionine = S-methyl-L-methionyl-[protein] + S-adenosyl-L-homocysteine. Methyltransferase that performs automethylation. No other methyl-accepting substrate has been identified yet. Component of the velvet transcription factor complex that acts as a global regulator for secondary metabolite gene expression. Controls the expression of the T-toxin gene cluster. Promotes oxidative stress tolerance and acts as a virulence factors during infection. Negatively regulate mycelial pigmentation and controls sexual development, as well as asexual development during vegetative growth. This Cochliobolus heterostrophus (strain C5 / ATCC 48332 / race O) (Southern corn leaf blight fungus) protein is Secondary metabolism regulator LAE1.